We begin with the raw amino-acid sequence, 525 residues long: Keratin, type II cytoskeletal 71 (525 aa).

Residues 1 to 131 (MSRQFTCKSG…DPEIQKVRAQ (131 aa)) are head. Positions 132–167 (EREQIKALNNKFASFIDKVRFLEQQNQVLETKWELL) are coil 1A. An IF rod domain is found at 132–445 (EREQIKALNN…KLLESEECRM (314 aa)). Residues 168–186 (QQLDLNNCKNNLEPILEGY) form a linker 1 region. The segment at 187-278 (ISNLRKQLET…CLYEAEIAQI (92 aa)) is coil 1B. The tract at residues 279 to 302 (QSHISDMSVILSMDNNRDLNLDSI) is linker 12. The segment at 303–441 (IDEVRAQYED…ATYRKLLESE (139 aa)) is coil 2. A tail region spans residues 442–525 (ECRMSGEFPS…LSAPSKKASR (84 aa)). The interval 492–525 (VRGGESRSRSSTTDYKDALGKGSSLSAPSKKASR) is disordered. Residues 495–510 (GESRSRSSTTDYKDAL) are compositionally biased toward basic and acidic residues.

Belongs to the intermediate filament family. As to quaternary structure, heterodimer of a type I and a type II keratin. Associates with KRT16 and/or KRT17.

The protein localises to the cytoplasm. It is found in the cytoskeleton. Its function is as follows. Plays a central role in hair formation. Essential component of keratin intermediate filaments in the inner root sheath (IRS) of the hair follicle. In Bos taurus (Bovine), this protein is Keratin, type II cytoskeletal 71 (KRT71).